A 317-amino-acid polypeptide reads, in one-letter code: Acetyl-coenzyme A carboxylase carboxyl transferase subunit alpha (317 aa).

Residues 33 to 294 (NLDDEIARLQ…KQRLLEDLAD (262 aa)) form the CoA carboxyltransferase C-terminal domain.

This sequence belongs to the AccA family. Acetyl-CoA carboxylase is a heterohexamer composed of biotin carboxyl carrier protein (AccB), biotin carboxylase (AccC) and two subunits each of ACCase subunit alpha (AccA) and ACCase subunit beta (AccD).

The protein localises to the cytoplasm. It catalyses the reaction N(6)-carboxybiotinyl-L-lysyl-[protein] + acetyl-CoA = N(6)-biotinyl-L-lysyl-[protein] + malonyl-CoA. The protein operates within lipid metabolism; malonyl-CoA biosynthesis; malonyl-CoA from acetyl-CoA: step 1/1. Component of the acetyl coenzyme A carboxylase (ACC) complex. First, biotin carboxylase catalyzes the carboxylation of biotin on its carrier protein (BCCP) and then the CO(2) group is transferred by the carboxyltransferase to acetyl-CoA to form malonyl-CoA. The protein is Acetyl-coenzyme A carboxylase carboxyl transferase subunit alpha of Glaesserella parasuis serovar 5 (strain SH0165) (Haemophilus parasuis).